Consider the following 624-residue polypeptide: (-)-beta-phellandrene synthase 2, chloroplastic (624 aa).

The N-terminal 48 residues, 1–48, are a transit peptide targeting the chloroplast; sequence MAIVSSVPLASKSCLHKSLISSIHKLKPFCRTIPTLGMSRPGKYVMPS. 3 residues coordinate Mg(2+): Asp375, Asp379, and Asp527. The DDXXD motif signature appears at 375–379; sequence DDMYD.

Belongs to the terpene synthase family. Tpsd subfamily. Mg(2+) is required as a cofactor. It depends on Mn(2+) as a cofactor.

Its subcellular location is the plastid. The protein localises to the chloroplast. It catalyses the reaction (2E)-geranyl diphosphate = (-)-beta-phellandrene + diphosphate. It participates in terpene metabolism; oleoresin biosynthesis. Terpene synthase (TPS) involved in the biosynthesis of monoterpene natural products included in conifer oleoresin secretions and volatile emissions; these compounds contribute to biotic and abiotic stress defense against herbivores and pathogens. Catalyzes the conversion of (2E)-geranyl diphosphate (GPP) to (-)-beta-phellandrene. This chain is (-)-beta-phellandrene synthase 2, chloroplastic, found in Picea sitchensis (Sitka spruce).